Reading from the N-terminus, the 245-residue chain is ATP synthase subunit a, chloroplastic (245 aa).

The next 5 membrane-spanning stretches (helical) occupy residues 34-54 (TLMT…LSNL), 93-113 (VPFL…GALL), 132-152 (INTT…AGIS), 197-217 (LVIA…LMLL), and 218-238 (GLFT…AYIG).

Belongs to the ATPase A chain family. In terms of assembly, F-type ATPases have 2 components, CF(1) - the catalytic core - and CF(0) - the membrane proton channel. CF(1) has five subunits: alpha(3), beta(3), gamma(1), delta(1), epsilon(1). CF(0) has four main subunits: a, b, b' and c.

It localises to the plastid. It is found in the chloroplast thylakoid membrane. Functionally, key component of the proton channel; it plays a direct role in the translocation of protons across the membrane. This chain is ATP synthase subunit a, chloroplastic, found in Bigelowiella natans (Pedinomonas minutissima).